The following is a 259-amino-acid chain: (3R)-3-hydroxyacyl-CoA dehydrogenase (259 aa).

NAD(+) contacts are provided by residues L13–I21 and D40–L41. At S58 the chain carries Phosphoserine. At K66 the chain carries N6-acetyllysine. A72 to V74 is an NAD(+) binding site. Residue S154 participates in substrate binding. K158 is subject to N6-succinyllysine. The active-site Proton acceptor is the Y167. Residues Y167–K171 and I200–T202 each bind NAD(+). The residue at position 171 (K171) is an N6-succinyllysine.

It belongs to the short-chain dehydrogenases/reductases (SDR) family. Heterotetramer with CBR4; contains two molecules of HSD17B8 and CBR4. In terms of tissue distribution, kidney, liver, testis, ovary and spleen. Oviduct, uterus, mammary gland, vagina, prostate, clitoral gland and moderately heart, dorsal skin, brain and lung.

The protein localises to the mitochondrion matrix. It catalyses the reaction a (3R)-3-hydroxyacyl-CoA + NAD(+) = a 3-oxoacyl-CoA + NADH + H(+). The enzyme catalyses 17beta-estradiol + NAD(+) = estrone + NADH + H(+). It carries out the reaction testosterone + NAD(+) = androst-4-ene-3,17-dione + NADH + H(+). The catalysed reaction is 17beta-hydroxy-5alpha-androstan-3-one + NAD(+) = 5alpha-androstan-3,17-dione + NADH + H(+). Its pathway is lipid metabolism; fatty acid biosynthesis. It functions in the pathway steroid biosynthesis; estrogen biosynthesis. The protein operates within lipid metabolism; mitochondrial fatty acid beta-oxidation. Functionally, required for the solubility and assembly of the heterotetramer 3-ketoacyl-[acyl carrier protein] (ACP) reductase functional complex (KAR or KAR1) that forms part of the mitochondrial fatty acid synthase (mtFAS). Alpha-subunit of the KAR complex, acts as scaffold protein, required for the stability of carbonyl reductase type-4 (CBR4, beta-subunit of the KAR complex) and for its 3-ketoacyl-ACP reductase activity, thereby participating in mitochondrial fatty acid biosynthesis. Catalyzes the NAD-dependent conversion of (3R)-3-hydroxyacyl-CoA into 3-ketoacyl-CoA (3-oxoacyl-CoA) with no chain length preference, this enzymatic activity is not needed for the KAR function. Prefers (3R)-3-hydroxyacyl-CoA over (3S)-3-hydroxyacyl-CoA and displays enzymatic activity only in the presence of NAD(+)(H). Cooperates with enoyl-CoA hydratase 1 in mitochondria, together they constitute an alternative route to the auxiliary enzyme pathways for the breakdown of Z-PUFA (cis polyunsaturated fatty acid) enoyl-esters. NAD-dependent 17-beta-hydroxysteroid dehydrogenase with highest activity towards estradiol. It efficiently catalyzes the oxidation of estradiol (E2), testosterone, and dihydrotestosterone. Primarily an oxidative enzyme, it can switch to a reductive mode determined in the appropriate physiologic milieu and catalyze the reduction of estrone (E1) to form biologically active estradiol (E2). The chain is (3R)-3-hydroxyacyl-CoA dehydrogenase (Hsd17b8) from Mus musculus (Mouse).